The primary structure comprises 598 residues: Elongation factor 4 (598 aa).

In terms of domain architecture, tr-type G spans 2-184 (KQIRNFSIIA…RLVKEIPAPE (183 aa)). GTP is bound by residues 14-19 (DHGKST) and 131-134 (NKID).

It belongs to the TRAFAC class translation factor GTPase superfamily. Classic translation factor GTPase family. LepA subfamily.

The protein localises to the cell inner membrane. The enzyme catalyses GTP + H2O = GDP + phosphate + H(+). Required for accurate and efficient protein synthesis under certain stress conditions. May act as a fidelity factor of the translation reaction, by catalyzing a one-codon backward translocation of tRNAs on improperly translocated ribosomes. Back-translocation proceeds from a post-translocation (POST) complex to a pre-translocation (PRE) complex, thus giving elongation factor G a second chance to translocate the tRNAs correctly. Binds to ribosomes in a GTP-dependent manner. In Photorhabdus laumondii subsp. laumondii (strain DSM 15139 / CIP 105565 / TT01) (Photorhabdus luminescens subsp. laumondii), this protein is Elongation factor 4.